A 191-amino-acid polypeptide reads, in one-letter code: Ankyrin repeat domain-containing protein 22 (191 aa).

4 ANK repeats span residues 39–68, 72–100, 101–130, and 134–163; these read NGDT…DVNL, KERT…MPVL, LIGY…EVNA, and DGYT…DPMI.

The chain is Ankyrin repeat domain-containing protein 22 (Ankrd22) from Mus musculus (Mouse).